The primary structure comprises 544 residues: Thermosome subunit (544 aa).

Belongs to the TCP-1 chaperonin family. Forms an oligomeric complex of eight-membered rings.

Functionally, molecular chaperone; binds unfolded polypeptides in vitro, and has a weak ATPase activity. In Methanothermococcus thermolithotrophicus (Methanococcus thermolithotrophicus), this protein is Thermosome subunit (ths).